Here is a 506-residue protein sequence, read N- to C-terminus: Probable UTP--glucose-1-phosphate uridylyltransferase (506 aa).

Ser-15 and Ser-17 each carry phosphoserine. UTP is bound by residues 115–118 (LNGG), Lys-129, Gln-192, and Gly-221. A substrate-binding site is contributed by 117-118 (GG). Position 129 (Lys-129) interacts with Mg(2+). Residues His-222 and 250–252 (NID) contribute to the substrate site. Asp-252 and Lys-394 together coordinate UTP. Asp-252 contacts Mg(2+). Residue Lys-394 is part of the active site. Residues 455 to 506 (HLTITGDVNIGRNVTLKGTVIIVASDANRIDIPNGSVLENCVITGNLNILEH) form an oligomerization region.

Belongs to the UDPGP type 1 family. As to quaternary structure, homooctamer.

The protein resides in the cytoplasm. It localises to the nucleus. It carries out the reaction alpha-D-glucose 1-phosphate + UTP + H(+) = UDP-alpha-D-glucose + diphosphate. Plays a central role as a glucosyl donor in cellular metabolic pathways. This is Probable UTP--glucose-1-phosphate uridylyltransferase (fyu1) from Schizosaccharomyces pombe (strain 972 / ATCC 24843) (Fission yeast).